The following is a 106-amino-acid chain: uncharacterized protein (106 aa).

The disordered stretch occupies residues 54–106 (RSTLVATSPRRRSLVQQRRPPLREQNGGSGSSCVSSGGSASTVKTPGSRRASK). A compositionally biased stretch (low complexity) spans 84 to 94 (SSCVSSGGSAS).

This is an uncharacterized protein from Human adenovirus C serotype 2 (HAdV-2).